A 162-amino-acid chain; its full sequence is RNA pyrophosphohydrolase (162 aa).

The 143-residue stretch at 7–149 (KYRPCVGIML…KKEVYKTVIE (143 aa)) folds into the Nudix hydrolase domain. The Nudix box motif lies at 40 to 61 (GGVDDGEELEQAALRELLEEVG).

The protein belongs to the Nudix hydrolase family. RppH subfamily. A divalent metal cation serves as cofactor.

In terms of biological role, accelerates the degradation of transcripts by removing pyrophosphate from the 5'-end of triphosphorylated RNA, leading to a more labile monophosphorylated state that can stimulate subsequent ribonuclease cleavage. This Wolbachia pipientis wMel protein is RNA pyrophosphohydrolase.